The sequence spans 272 residues: Large ribosomal subunit protein uL2cz/uL2cy (272 aa).

Disordered stretches follow at residues Met1 to Arg33 and Val220 to Lys272. Residue Ala2 is modified to N-methylalanine. The span at Lys7–Ser30 shows a compositional bias: polar residues.

The protein belongs to the universal ribosomal protein uL2 family. Component of the chloroplast large ribosomal subunit (LSU). Mature 70S chloroplast ribosomes of higher plants consist of a small (30S) and a large (50S) subunit. The 30S small subunit contains 1 molecule of ribosomal RNA (16S rRNA) and 24 different proteins. The 50S large subunit contains 3 rRNA molecules (23S, 5S and 4.5S rRNA) and 33 different proteins.

Its subcellular location is the plastid. It localises to the chloroplast. Functionally, component of the chloroplast ribosome (chloro-ribosome), a dedicated translation machinery responsible for the synthesis of chloroplast genome-encoded proteins, including proteins of the transcription and translation machinery and components of the photosynthetic apparatus. The sequence is that of Large ribosomal subunit protein uL2cz/uL2cy (rpl2-A) from Spinacia oleracea (Spinach).